A 366-amino-acid chain; its full sequence is Carbamoyl phosphate synthase small chain (366 aa).

The segment at 1–172 is CPSase; the sequence is MYGILVLEDG…TYNAENEKTS (172 aa). Residues Ser-45, Gly-220, and Gly-222 each contribute to the L-glutamine site. Residues 172–363 form the Glutamine amidotransferase type-1 domain; that stretch reads SCVLIDCGVK…VELGIKFKAE (192 aa). Catalysis depends on Cys-247, which acts as the Nucleophile. Positions 248, 251, 289, 291, and 292 each coordinate L-glutamine. Catalysis depends on residues His-336 and Glu-338.

Belongs to the CarA family. As to quaternary structure, composed of two chains; the small (or glutamine) chain promotes the hydrolysis of glutamine to ammonia, which is used by the large (or ammonia) chain to synthesize carbamoyl phosphate. Tetramer of heterodimers (alpha,beta)4.

The catalysed reaction is hydrogencarbonate + L-glutamine + 2 ATP + H2O = carbamoyl phosphate + L-glutamate + 2 ADP + phosphate + 2 H(+). It carries out the reaction L-glutamine + H2O = L-glutamate + NH4(+). It participates in amino-acid biosynthesis; L-arginine biosynthesis; carbamoyl phosphate from bicarbonate: step 1/1. The protein operates within pyrimidine metabolism; UMP biosynthesis via de novo pathway; (S)-dihydroorotate from bicarbonate: step 1/3. In terms of biological role, small subunit of the glutamine-dependent carbamoyl phosphate synthetase (CPSase). CPSase catalyzes the formation of carbamoyl phosphate from the ammonia moiety of glutamine, carbonate, and phosphate donated by ATP, constituting the first step of 2 biosynthetic pathways, one leading to arginine and/or urea and the other to pyrimidine nucleotides. The small subunit (glutamine amidotransferase) binds and cleaves glutamine to supply the large subunit with the substrate ammonia. The protein is Carbamoyl phosphate synthase small chain of Methanococcus maripaludis (strain C7 / ATCC BAA-1331).